Reading from the N-terminus, the 333-residue chain is Taste receptor type 2 member 123 (333 aa).

Residues 1 to 14 (MFSQKTNYSHLFTF) lie on the Extracellular side of the membrane. Residues 15–37 (SIIFYVEIVTGILGNGFIALVNI) form a helical membrane-spanning segment. Residues 38–57 (MDWLKRRRISTADQILTALA) are Cytoplasmic-facing. The helical transmembrane segment at 58–77 (LTRLIYVWSVLICILLLFLC) threads the bilayer. The Extracellular segment spans residues 78-91 (PHLSMRPEMFTAIG). A helical transmembrane segment spans residues 92–114 (VIWVVDNHFSIWLATCLGVFYFL). The Cytoplasmic portion of the chain corresponds to 115-133 (KIASFSNSLFLYLKWRVKK). Residues 134–156 (VVLMIILISLIFLMLNISSLGMY) form a helical membrane-spanning segment. Topologically, residues 157–204 (DHFSIDVYEGNMSYNLVDSTHFPRIFLFTNSSKVFLIANSSHVFLPIN) are extracellular. N167, N186, and N195 each carry an N-linked (GlcNAc...) asparagine glycan. The chain crosses the membrane as a helical span at residues 205 to 227 (SLFMLIPFTVSLVAFFVLFLSLW). At 228 to 250 (KHHKKMQVNAKGPRDASTMAHTK) the chain is on the cytoplasmic side. The helical transmembrane segment at 251 to 273 (ALQIGFSFLLLYAIYLLFIITGI) threads the bilayer. The Extracellular portion of the chain corresponds to 274 to 282 (LNLDLMRCI). A helical membrane pass occupies residues 283-305 (VILLFDHISGAVFSISHSFVLIL). Over 306 to 333 (GNSKLRQATLSVLPCLRCRSKDMDTVVF) the chain is Cytoplasmic.

Belongs to the G-protein coupled receptor T2R family. In terms of tissue distribution, expressed in subsets of taste receptor cells of the tongue and palate epithelium and exclusively in gustducin-positive cells. Expressed in the antrum and fundus (part of the stomach), duodenum and in gastric endocrine cells.

It localises to the membrane. Gustducin-coupled receptor implicated in the perception of bitter compounds in the oral cavity and the gastrointestinal tract. Signals through PLCB2 and the calcium-regulated cation channel TRPM5. This is Taste receptor type 2 member 123 (Tas2r123) from Rattus norvegicus (Rat).